A 176-amino-acid polypeptide reads, in one-letter code: MDLPGPIHDFLLVFLGSGLIVGGLGVVLLTNPIFSAFSLGLVLVCISLFFSLSNSYFVAAAQLLIYVGAINVLILFAVMFMNGSEYSKDLTLWTVGDGITSLVCTSIFISLITTILDTSWYGIIWTTKSNQIIEQDLIGNSQQIGIHLSTDFFLPFELISIILLVSLIGAIAVARQ.

A run of 5 helical transmembrane segments spans residues 10 to 30 (FLLV…VLLT), 32 to 52 (PIFS…FFSL), 61 to 81 (AQLL…VMFM), 92 to 112 (LWTV…ISLI), and 152 to 172 (FFLP…GAIA).

The protein belongs to the complex I subunit 6 family. In terms of assembly, NDH is composed of at least 16 different subunits, 5 of which are encoded in the nucleus.

The protein resides in the plastid. It localises to the chloroplast thylakoid membrane. It catalyses the reaction a plastoquinone + NADH + (n+1) H(+)(in) = a plastoquinol + NAD(+) + n H(+)(out). The enzyme catalyses a plastoquinone + NADPH + (n+1) H(+)(in) = a plastoquinol + NADP(+) + n H(+)(out). NDH shuttles electrons from NAD(P)H:plastoquinone, via FMN and iron-sulfur (Fe-S) centers, to quinones in the photosynthetic chain and possibly in a chloroplast respiratory chain. The immediate electron acceptor for the enzyme in this species is believed to be plastoquinone. Couples the redox reaction to proton translocation, and thus conserves the redox energy in a proton gradient. This Oenothera argillicola (Appalachian evening primrose) protein is NAD(P)H-quinone oxidoreductase subunit 6, chloroplastic (ndhG).